Here is a 429-residue protein sequence, read N- to C-terminus: Serine--tRNA ligase (429 aa).

Residue 235-237 coordinates L-serine; sequence TAE. 266 to 268 serves as a coordination point for ATP; it reads RSE. Glutamate 289 provides a ligand contact to L-serine. 353–356 is an ATP binding site; it reads EISS. An L-serine-binding site is contributed by serine 389.

The protein belongs to the class-II aminoacyl-tRNA synthetase family. Type-1 seryl-tRNA synthetase subfamily. Homodimer. The tRNA molecule binds across the dimer.

Its subcellular location is the cytoplasm. The catalysed reaction is tRNA(Ser) + L-serine + ATP = L-seryl-tRNA(Ser) + AMP + diphosphate + H(+). The enzyme catalyses tRNA(Sec) + L-serine + ATP = L-seryl-tRNA(Sec) + AMP + diphosphate + H(+). It functions in the pathway aminoacyl-tRNA biosynthesis; selenocysteinyl-tRNA(Sec) biosynthesis; L-seryl-tRNA(Sec) from L-serine and tRNA(Sec): step 1/1. In terms of biological role, catalyzes the attachment of serine to tRNA(Ser). Is also able to aminoacylate tRNA(Sec) with serine, to form the misacylated tRNA L-seryl-tRNA(Sec), which will be further converted into selenocysteinyl-tRNA(Sec). This Haemophilus influenzae (strain PittGG) protein is Serine--tRNA ligase.